Consider the following 481-residue polypeptide: Protein nucleotidyltransferase YdiU (481 aa).

ATP-binding residues include glycine 87, glycine 89, arginine 90, lysine 110, aspartate 122, glycine 123, arginine 173, and arginine 180. The Proton acceptor role is filled by aspartate 249. Mg(2+)-binding residues include asparagine 250 and aspartate 259. Aspartate 259 is an ATP binding site.

This sequence belongs to the SELO family. Mg(2+) serves as cofactor. Mn(2+) is required as a cofactor.

It carries out the reaction L-seryl-[protein] + ATP = 3-O-(5'-adenylyl)-L-seryl-[protein] + diphosphate. The enzyme catalyses L-threonyl-[protein] + ATP = 3-O-(5'-adenylyl)-L-threonyl-[protein] + diphosphate. The catalysed reaction is L-tyrosyl-[protein] + ATP = O-(5'-adenylyl)-L-tyrosyl-[protein] + diphosphate. It catalyses the reaction L-histidyl-[protein] + UTP = N(tele)-(5'-uridylyl)-L-histidyl-[protein] + diphosphate. It carries out the reaction L-seryl-[protein] + UTP = O-(5'-uridylyl)-L-seryl-[protein] + diphosphate. The enzyme catalyses L-tyrosyl-[protein] + UTP = O-(5'-uridylyl)-L-tyrosyl-[protein] + diphosphate. Nucleotidyltransferase involved in the post-translational modification of proteins. It can catalyze the addition of adenosine monophosphate (AMP) or uridine monophosphate (UMP) to a protein, resulting in modifications known as AMPylation and UMPylation. This is Protein nucleotidyltransferase YdiU from Mycobacterium sp. (strain KMS).